Reading from the N-terminus, the 495-residue chain is DUF21 domain-containing protein At4g14230 (495 aa).

Topologically, residues 1–42 are extracellular; the sequence is MHPINAVVAARMLAGISQSNALQSEAIPFGSLEWITYAGISC. A CNNM transmembrane domain is found at 30–212; that stretch reads GSLEWITYAG…GKGGELTHDE (183 aa). A helical membrane pass occupies residues 43 to 63; that stretch reads FLVLFAGIMSGLTLGLMSLGL. Over 64-92 the chain is Cytoplasmic; sequence VELEILQRSGTPKEKKQSAAIFPVVQKQH. Residues 93–113 form a helical membrane-spanning segment; sequence QLLVTLLLFNALAMEGLPIYL. Over 114–120 the chain is Extracellular; that stretch reads DKIFNEY. A helical membrane pass occupies residues 121–141; it reads VAIILSVTFVLFVGEVIPQAI. The Cytoplasmic segment spans residues 142–146; it reads CTRYG. The chain crosses the membrane as a helical span at residues 147–167; the sequence is LAVGANLVWLVRILMVLSYPI. Topologically, residues 168–495 are extracellular; it reads SFPIAKMLDW…TMTGPPQGNN (328 aa). CBS domains are found at residues 231–291, 296–356, and 357–426; these read MTPI…TGTL, GIRR…NNSE, and LTAP…IVDE. Residues 330-354 are disordered; that stretch reads KGKSKGHPSTLHEENSGESNVSSNN. An N-linked (GlcNAc...) asparagine glycan is attached at asparagine 349. Serine 352 is modified (phosphoserine). The N-linked (GlcNAc...) asparagine glycan is linked to asparagine 353. The disordered stretch occupies residues 455–495; sequence SGRRLLGPKGSGGPKTPKASSTPKPDDKLMGTMTGPPQGNN. The segment covering 456–477 has biased composition (low complexity); it reads GRRLLGPKGSGGPKTPKASSTP.

Its subcellular location is the membrane. This chain is DUF21 domain-containing protein At4g14230 (CBSDUF2), found in Arabidopsis thaliana (Mouse-ear cress).